Here is a 299-residue protein sequence, read N- to C-terminus: Tyrosine recombinase XerC (299 aa).

One can recognise a Core-binding (CB) domain in the interval 3 to 87; that stretch reads PQCQSYLQQF…AIKQWGEFLL (85 aa). Residues 108-287 enclose the Tyr recombinase domain; that stretch reads PLPKNIDVDS…DFQHLAKVYD (180 aa). Active-site residues include Arg-147, Lys-171, His-239, Arg-242, and His-265. Residue Tyr-274 is the O-(3'-phospho-DNA)-tyrosine intermediate of the active site.

It belongs to the 'phage' integrase family. XerC subfamily. Forms a cyclic heterotetrameric complex composed of two molecules of XerC and two molecules of XerD.

It localises to the cytoplasm. Site-specific tyrosine recombinase, which acts by catalyzing the cutting and rejoining of the recombining DNA molecules. The XerC-XerD complex is essential to convert dimers of the bacterial chromosome into monomers to permit their segregation at cell division. It also contributes to the segregational stability of plasmids. The polypeptide is Tyrosine recombinase XerC (Shewanella sp. (strain ANA-3)).